We begin with the raw amino-acid sequence, 712 residues long: Polyribonucleotide nucleotidyltransferase (712 aa).

Residues D487 and D493 each coordinate Mg(2+). Positions 554-613 constitute a KH domain; that stretch reads PRIEVMNIPVDKIREVIGSGGKVIREIVEKTGAKINIEDDGTVKIASSSGKEIEAARKWI. Residues 623 to 691 form the S1 motif domain; the sequence is GQIYEGTVVK…ERGKVRLSMK (69 aa).

It belongs to the polyribonucleotide nucleotidyltransferase family. Mg(2+) serves as cofactor.

The protein localises to the cytoplasm. It catalyses the reaction RNA(n+1) + phosphate = RNA(n) + a ribonucleoside 5'-diphosphate. In terms of biological role, involved in mRNA degradation. Catalyzes the phosphorolysis of single-stranded polyribonucleotides processively in the 3'- to 5'-direction. This Rhizobium etli (strain ATCC 51251 / DSM 11541 / JCM 21823 / NBRC 15573 / CFN 42) protein is Polyribonucleotide nucleotidyltransferase.